The following is a 441-amino-acid chain: tRNA modification GTPase MnmE (441 aa).

Residues Arg21, Glu79, and Lys118 each contribute to the (6S)-5-formyl-5,6,7,8-tetrahydrofolate site. Positions 214–370 (GFKIAIVGKP…LEGYLKTQDT (157 aa)) constitute a TrmE-type G domain. Residues 224–229 (NVGKSS), 243–249 (SDEAGTT), and 268–271 (DTAG) contribute to the GTP site. Mg(2+)-binding residues include Ser228 and Thr249. Lys441 contacts (6S)-5-formyl-5,6,7,8-tetrahydrofolate.

Belongs to the TRAFAC class TrmE-Era-EngA-EngB-Septin-like GTPase superfamily. TrmE GTPase family. Homodimer. Heterotetramer of two MnmE and two MnmG subunits. K(+) is required as a cofactor.

Its subcellular location is the cytoplasm. Its function is as follows. Exhibits a very high intrinsic GTPase hydrolysis rate. Involved in the addition of a carboxymethylaminomethyl (cmnm) group at the wobble position (U34) of certain tRNAs, forming tRNA-cmnm(5)s(2)U34. This is tRNA modification GTPase MnmE from Campylobacter concisus (strain 13826).